The chain runs to 1741 residues: DNA-directed RNA polymerase III subunit RPC1 (1741 aa).

7 residues coordinate Zn(2+): Cys79, Cys82, Cys89, His92, Cys119, Cys122, and Cys160. Positions 722, 724, and 726 each coordinate Mg(2+). Residues 1099–1111 (PFEFLAHARAGRD) form a bridging helix region. Positions 1719–1741 (RHANKRSWSRGKERHASLKPKNR) are disordered.

Belongs to the RNA polymerase beta' chain family. As to quaternary structure, component of the RNA polymerase III (Pol III) complex consisting of 17 subunits.

The protein resides in the nucleus. The catalysed reaction is RNA(n) + a ribonucleoside 5'-triphosphate = RNA(n+1) + diphosphate. In terms of biological role, DNA-dependent RNA polymerase catalyzes the transcription of DNA into RNA using the four ribonucleoside triphosphates as substrates. Largest and catalytic core component of RNA polymerase III which synthesizes small RNAs, such as 5S rRNA and tRNAs. Forms the polymerase active center together with the second largest subunit. A single-stranded DNA template strand of the promoter is positioned within the central active site cleft of Pol III. A bridging helix emanates from RPC1 and crosses the cleft near the catalytic site and is thought to promote translocation of Pol III by acting as a ratchet that moves the RNA-DNA hybrid through the active site by switching from straight to bent conformations at each step of nucleotide addition. The chain is DNA-directed RNA polymerase III subunit RPC1 (RPOA3) from Giardia intestinalis (Giardia lamblia).